Reading from the N-terminus, the 529-residue chain is MFPGARILATLTLALHLLHGTHAAIGPTGDMYIVNEDVSPDGFTRSAVVARSDPTTNGTSETLTGVLVQGNKGDNFQLNVLNQLSDTTMLKTTSIHWHGFFQSGSTWADGPAFVNQCPIASGNSFLYDFNVPDQAGTFWYHSHLSTQYCDGLRGPFIVYDPSDPHLSLYDVDNADTIITLEDWYHVVAPQNAVLPTADSTLINGKGRFAGGPTSALAVINVESNKRYRFRLISMSCDPNFTFSIDGHSLQVIEADAVNIVPIVVDSIQIFAGQRYSFVLNANQTVDNYWIRADPNLGSTGFDGGINSAILRYAGATEDDPTTTSSTSTPLEETNLVPLENPGAPGPAVPGGADININLAMAFDVTNFELTINGSPFKAPTAPVLLQILSGATTAASLLPSGSIYSLEANKVVEISIPALAVGGPHPFHLHGHTFDVIRSAGSTTYNFDTPARRDVVNTGTDANDNVTIRFVTDNPGPWFLHCHIDWHLEIGLAVVFAEDVTSITAPPAAWDDLCPIYDALSDSDKGGIA.

Residues 1–23 (MFPGARILATLTLALHLLHGTHA) form the signal peptide. 3 consecutive Plastocyanin-like domains span residues 25-159 (IGPT…FIVY), 170-312 (DVDN…ILRY), and 380-499 (TAPV…FAED). The N-linked (GlcNAc...) asparagine glycan is linked to Asn57. Cu cation contacts are provided by His96, His98, His141, and His143. Disulfide bonds link Cys117–Cys514 and Cys149–Cys236. N-linked (GlcNAc...) asparagine glycosylation is found at Asn239 and Asn282. Cu cation-binding residues include His425, His428, His430, His481, Cys482, His483, and His487.

Belongs to the multicopper oxidase family. Cu cation serves as cofactor.

The protein localises to the secreted. It carries out the reaction 4 hydroquinone + O2 = 4 benzosemiquinone + 2 H2O. Lignin degradation and detoxification of lignin-derived products. This is Laccase-1 (POX1) from Pleurotus ostreatus (Oyster mushroom).